Consider the following 76-residue polypeptide: uncharacterized protein (76 aa).

Residues 20–42 (GIVWGPKLAPWGITLGLGAFYFF) traverse the membrane as a helical segment.

Its subcellular location is the membrane. This is an uncharacterized protein from Dictyostelium discoideum (Social amoeba).